A 394-amino-acid polypeptide reads, in one-letter code: Elongation factor Tu (394 aa).

The 195-residue stretch at 10 to 204 folds into the tr-type G domain; sequence KPHVNVGTIG…HLDSYIPEPE (195 aa). The segment at 19-26 is G1; the sequence is GHVDHGKT. 19 to 26 contributes to the GTP binding site; it reads GHVDHGKT. Thr-26 contacts Mg(2+). The segment at 60–64 is G2; the sequence is GITIN. The interval 81–84 is G3; that stretch reads DCPG. GTP contacts are provided by residues 81 to 85 and 136 to 139; these read DCPGH and NKCD. The segment at 136-139 is G4; it reads NKCD. A G5 region spans residues 174-176; sequence SAL.

The protein belongs to the TRAFAC class translation factor GTPase superfamily. Classic translation factor GTPase family. EF-Tu/EF-1A subfamily. Monomer.

It is found in the cytoplasm. The catalysed reaction is GTP + H2O = GDP + phosphate + H(+). Its function is as follows. GTP hydrolase that promotes the GTP-dependent binding of aminoacyl-tRNA to the A-site of ribosomes during protein biosynthesis. In Haemophilus ducreyi (strain 35000HP / ATCC 700724), this protein is Elongation factor Tu.